The following is a 162-amino-acid chain: Small ribosomal subunit protein uS13 (162 aa).

The segment at 142–162 is disordered; that stretch reads RGQRTKSTGRRGSTVGVSRKK.

Belongs to the universal ribosomal protein uS13 family. As to quaternary structure, part of the 30S ribosomal subunit. Forms a loose heterodimer with protein S19. Forms two bridges to the 50S subunit in the 70S ribosome.

Located at the top of the head of the 30S subunit, it contacts several helices of the 16S rRNA. In the 70S ribosome it contacts the 23S rRNA (bridge B1a) and protein L5 of the 50S subunit (bridge B1b), connecting the 2 subunits; these bridges are implicated in subunit movement. The protein is Small ribosomal subunit protein uS13 of Methanosarcina mazei (strain ATCC BAA-159 / DSM 3647 / Goe1 / Go1 / JCM 11833 / OCM 88) (Methanosarcina frisia).